The following is a 175-amino-acid chain: Microfibril-associated glycoprotein 3 (175 aa).

Over 1–175 (FRTEGAEKLQ…KDGSFESCQL (175 aa)) the chain is Cytoplasmic. The interval 85–175 (KERPALNAQD…KDGSFESCQL (91 aa)) is disordered. Residues 145-175 (QDSSHFSPPDDTGSTESNSNYKDGSFESCQL) are compositionally biased toward polar residues.

Post-translationally, glycosylated.

It is found in the cell membrane. Component of the elastin-associated microfibrils. The protein is Microfibril-associated glycoprotein 3 (MFAP3) of Bos taurus (Bovine).